The chain runs to 590 residues: Cytidine monophosphate-N-acetylneuraminic acid hydroxylase (590 aa).

Residues 14–112 (LSPVEVASLK…VEMDENNRLL (99 aa)) form the Rieske domain. Residues Cys-54, His-56, Cys-75, and His-78 each coordinate [2Fe-2S] cluster.

It belongs to the CMP-Neu5Ac hydroxylase family. It depends on [2Fe-2S] cluster as a cofactor.

The protein resides in the cytoplasm. The enzyme catalyses CMP-N-acetyl-beta-neuraminate + 2 Fe(II)-[cytochrome b5] + O2 + 2 H(+) = CMP-N-glycoloyl-beta-neuraminate + 2 Fe(III)-[cytochrome b5] + H2O. It functions in the pathway amino-sugar metabolism; N-acetylneuraminate metabolism. Functionally, sialic acids are components of carbohydrate chains of glycoconjugates and are involved in cell-cell recognition and cell-pathogen interactions. Catalyzes the conversion of CMP-N-acetylneuraminic acid (CMP-Neu5Ac) into its hydroxylated derivative CMP-N-glycolylneuraminic acid (CMP-Neu5Gc), a sialic acid abundantly expressed at the surface of many cells. This Pan troglodytes (Chimpanzee) protein is Cytidine monophosphate-N-acetylneuraminic acid hydroxylase.